Reading from the N-terminus, the 253-residue chain is Probable transcriptional regulatory protein AM1_1847 (253 aa).

Belongs to the TACO1 family.

It localises to the cytoplasm. The sequence is that of Probable transcriptional regulatory protein AM1_1847 from Acaryochloris marina (strain MBIC 11017).